A 464-amino-acid chain; its full sequence is Isthmin-1 (464 aa).

The signal sequence occupies residues M1–A29. N39 carries N-linked (GlcNAc...) asparagine glycosylation. Disordered stretches follow at residues N50–D98, P135–S155, and S173–G219. Over residues V51 to L63 the composition is skewed to polar residues. Composition is skewed to basic and acidic residues over residues E66–A76 and E138–N147. Positions D218–P262 constitute a TSP type-1 domain. 3 disulfide bridges follow: C229–C256, C233–C261, and C244–C248. One can recognise an AMOP domain in the interval L289–E452.

Belongs to the isthmin family. In terms of assembly, interacts with integrin ITGAV/ITGB5.

It localises to the secreted. In terms of biological role, acts as an angiogenesis inhibitor. This is Isthmin-1 (ISM1) from Homo sapiens (Human).